An 86-amino-acid polypeptide reads, in one-letter code: High affinity immunoglobulin epsilon receptor subunit gamma (86 aa).

A signal peptide spans 1–18 (MIPAVVLLLLLLVEQAAA). The Extracellular segment spans residues 19 to 23 (LGEPQ). Residues 24–44 (LCYILDAILFLYGIVLTLLYC) traverse the membrane as a helical segment. Over 45-86 (RLKIQVRKAAIASYEKSDGVYTGLSTRNQETYETLKHEKPPQ) the chain is Cytoplasmic. Positions 54–82 (AIASYEKSDGVYTGLSTRNQETYETLKHE) constitute an ITAM domain. Position 65 is a phosphotyrosine (tyrosine 65). Serine 69 carries the phosphoserine modification. The residue at position 76 (tyrosine 76) is a Phosphotyrosine. Threonine 78 bears the Phosphothreonine mark.

It belongs to the CD3Z/FCER1G family. In terms of assembly, igE Fc receptor is a tetramer of an alpha chain, a beta chain, and two disulfide linked gamma chains. Associates with FCGR1A; forms a functional signaling complex. The signaling subunit of immunoglobulin gamma (IgG) Fc receptor complex. As a homodimer or a heterodimer of CD247 and FCER1G, associates with the ligand binding subunit FCGR3A to form a functional receptor complex. Associates with CLEC6A. Interacts with CLEC4E. Interacts (via ITAM domain) with SYK (via SH2 domains); activates SYK, enabling integrin-mediated activation of neutrophils and macrophages. Interacts with CSF2RB and recruits SYK in response to IL3 stimulation; this interaction is direct. Interacts with CD300LH; the interaction may be indirect. Interacts with CD300LD. Interacts with TARM1.

The protein resides in the cell membrane. In terms of biological role, adapter protein containing an immunoreceptor tyrosine-based activation motif (ITAM) that transduces activation signals from various immunoreceptors. As a component of the high-affinity immunoglobulin E (IgE) receptor, mediates allergic inflammatory signaling in mast cells. As a constitutive component of interleukin-3 receptor complex, selectively mediates interleukin 4/IL4 production by basophils priming T-cells toward effector T-helper 2 subset. Associates with pattern recognition receptors CLEC4D and CLEC4E to form a functional signaling complex in myeloid cells. Binding of mycobacterial trehalose 6,6'-dimycolate (TDM) to this receptor complex leads to phosphorylation of ITAM, triggering activation of SYK, CARD9 and NF-kappa-B, consequently driving maturation of antigen-presenting cells and shaping antigen-specific priming of T-cells toward effector T-helper 1 and T-helper 17 cell subtypes. May function cooperatively with other activating receptors. Functionally linked to integrin beta-2/ITGB2-mediated neutrophil activation. Also involved in integrin alpha-2/ITGA2-mediated platelet activation. In Macaca fascicularis (Crab-eating macaque), this protein is High affinity immunoglobulin epsilon receptor subunit gamma (FCER1G).